The chain runs to 87 residues: Small ribosomal subunit protein uS15 (87 aa).

The protein belongs to the universal ribosomal protein uS15 family. In terms of assembly, part of the 30S ribosomal subunit. Forms a bridge to the 50S subunit in the 70S ribosome, contacting the 23S rRNA.

Its function is as follows. One of the primary rRNA binding proteins, it binds directly to 16S rRNA where it helps nucleate assembly of the platform of the 30S subunit by binding and bridging several RNA helices of the 16S rRNA. Functionally, forms an intersubunit bridge (bridge B4) with the 23S rRNA of the 50S subunit in the ribosome. This chain is Small ribosomal subunit protein uS15, found in Clostridium beijerinckii (strain ATCC 51743 / NCIMB 8052) (Clostridium acetobutylicum).